The sequence spans 715 residues: Glycine--tRNA ligase beta subunit (715 aa).

It belongs to the class-II aminoacyl-tRNA synthetase family. In terms of assembly, tetramer of two alpha and two beta subunits.

The protein resides in the cytoplasm. The catalysed reaction is tRNA(Gly) + glycine + ATP = glycyl-tRNA(Gly) + AMP + diphosphate. This is Glycine--tRNA ligase beta subunit from Nitrosomonas eutropha (strain DSM 101675 / C91 / Nm57).